Consider the following 238-residue polypeptide: tRNA1(Val) (adenine(37)-N6)-methyltransferase (238 aa).

The protein belongs to the methyltransferase superfamily. tRNA (adenine-N(6)-)-methyltransferase family.

Its subcellular location is the cytoplasm. The enzyme catalyses adenosine(37) in tRNA1(Val) + S-adenosyl-L-methionine = N(6)-methyladenosine(37) in tRNA1(Val) + S-adenosyl-L-homocysteine + H(+). Functionally, specifically methylates the adenine in position 37 of tRNA(1)(Val) (anticodon cmo5UAC). The sequence is that of tRNA1(Val) (adenine(37)-N6)-methyltransferase from Shewanella baltica (strain OS185).